A 507-amino-acid polypeptide reads, in one-letter code: F-box only protein 31 (507 aa).

The tract at residues Arg19–Glu42 is disordered. Ser33 is subject to Phosphoserine. The span at Ser33–Glu42 shows a compositional bias: acidic residues. Thr37 is modified (phosphothreonine). Residues Arg50 to Glu55 carry the D box motif. Residues Arg50 to Arg96 enclose the F-box domain. Residues Cys192, His200, Cys216, and His222 each contribute to the Zn(2+) site. Ser264 is subject to Phosphoserine; by ATM. The short motif at Asp283 to Leu285 is the DDL motif element. The segment at Arg364–Ser421 is disordered. Over residues Ala374–Glu385 the composition is skewed to basic and acidic residues. At Ser448 the chain carries Phosphoserine.

Belongs to the FBXO31 family. In terms of assembly, part of a SCF (SKP1-cullin-F-box) protein ligase complex SCF(FBXO31) composed of CUL1, SKP1, RBX1 and FBXO31. Interacts (when phosphorylated at Ser-33) with CDC20, promoting ubiquitination by the APC/C complex. Phosphorylation at Ser-264 by ATM following gamma-irradiation results in its stabilization. Phosphorylation at Ser-448 in absence of stress promotes its ubiquitination and degradation by the SCF(FBXO46) complex. Phosphorylation at Ser-33 by AKT1 promotes association with CDC20 and ubiquitination by the APC/C complex. Post-translationally, ubiquitinated by the SCF(FBXO46) complex in absence of stress, promoting its degradation. Ubiquitinated by the APC/C complex following phosphorylation at Ser-33, leading to its degradation by the proteasome.

It is found in the cytoplasm. Its subcellular location is the cytoskeleton. It localises to the microtubule organizing center. The protein localises to the centrosome. It functions in the pathway protein modification; protein ubiquitination. Functionally, substrate-recognition component of the SCF(FBXO31) protein ligase complex, which specifically mediates the ubiquitination of proteins amidated at their C-terminus in response to oxidative stress, leading to their degradation by the proteasome. FBXO31 specifically recognizes and binds C-terminal peptides bearing an amide: C-terminal amidation in response to oxidative stress takes place following protein fragmentation. The SCF(FBXO31) also plays a role in G1 arrest following DNA damage by mediating ubiquitination of phosphorylated cyclin-D1 (CCND1), promoting its degradation by the proteasome, resulting in G1 arrest. The SCF(FBXO31) complex is however not a major regulator of CCND1 stability during the G1/S transition. In response to genotoxic stress, the SCF(FBXO31) complex directs ubiquitination and degradation of phosphorylated MDM2, thereby promoting p53/TP53-mediated DNA damage response. SCF(FBXO31) complex is required for genomic integrity by catalyzing ubiquitination and degradation of cyclin-A (CCNA1 and/or CCNA2) during the G1 phase. In response to genotoxic stress, the SCF(FBXO31) complex directs ubiquitination and degradation of phosphorylated FBXO46 and MAP2K6. SCF(FBXO31) complex promotes ubiquitination and degradation of CDT1 during the G2 phase to prevent re-replication. The SCF(FBXO31) complex also mediates ubiquitination and degradation of DUSP6, OGT and PARD6A. The chain is F-box only protein 31 from Rattus norvegicus (Rat).